Consider the following 257-residue polypeptide: NAD-capped RNA hydrolase NudC (257 aa).

A substrate-binding site is contributed by Arg-69. Cys-98 and Cys-101 together coordinate Zn(2+). Glu-111 is a substrate binding site. Positions 116 and 119 each coordinate Zn(2+). A substrate-binding site is contributed by Tyr-124. Residues Pro-125–Thr-248 form the Nudix hydrolase domain. Positions 158, 174, and 178 each coordinate a divalent metal cation. A Nudix box motif is present at residues Gly-159–Gly-180. Residue Gln-192–Ser-199 participates in substrate binding. Glu-219 contributes to the a divalent metal cation binding site. Position 241 (Ala-241) interacts with substrate.

Belongs to the Nudix hydrolase family. NudC subfamily. As to quaternary structure, homodimer. It depends on Mg(2+) as a cofactor. Requires Mn(2+) as cofactor. Zn(2+) is required as a cofactor.

It catalyses the reaction a 5'-end NAD(+)-phospho-ribonucleoside in mRNA + H2O = a 5'-end phospho-adenosine-phospho-ribonucleoside in mRNA + beta-nicotinamide D-ribonucleotide + 2 H(+). It carries out the reaction NAD(+) + H2O = beta-nicotinamide D-ribonucleotide + AMP + 2 H(+). The catalysed reaction is NADH + H2O = reduced beta-nicotinamide D-ribonucleotide + AMP + 2 H(+). In terms of biological role, mRNA decapping enzyme that specifically removes the nicotinamide adenine dinucleotide (NAD) cap from a subset of mRNAs by hydrolyzing the diphosphate linkage to produce nicotinamide mononucleotide (NMN) and 5' monophosphate mRNA. The NAD-cap is present at the 5'-end of some mRNAs and stabilizes RNA against 5'-processing. Has preference for mRNAs with a 5'-end purine. Catalyzes the hydrolysis of a broad range of dinucleotide pyrophosphates. This chain is NAD-capped RNA hydrolase NudC, found in Salmonella typhimurium (strain LT2 / SGSC1412 / ATCC 700720).